The chain runs to 364 residues: Chorismate synthase (364 aa).

NADP(+) is bound by residues Arg48 and Arg54. FMN is bound by residues 125 to 127 (RSS), 238 to 239 (NA), Gly278, 293 to 297 (KPTSS), and Arg319.

This sequence belongs to the chorismate synthase family. Homotetramer. The cofactor is FMNH2.

It catalyses the reaction 5-O-(1-carboxyvinyl)-3-phosphoshikimate = chorismate + phosphate. Its pathway is metabolic intermediate biosynthesis; chorismate biosynthesis; chorismate from D-erythrose 4-phosphate and phosphoenolpyruvate: step 7/7. In terms of biological role, catalyzes the anti-1,4-elimination of the C-3 phosphate and the C-6 proR hydrogen from 5-enolpyruvylshikimate-3-phosphate (EPSP) to yield chorismate, which is the branch point compound that serves as the starting substrate for the three terminal pathways of aromatic amino acid biosynthesis. This reaction introduces a second double bond into the aromatic ring system. The polypeptide is Chorismate synthase (Shewanella loihica (strain ATCC BAA-1088 / PV-4)).